Consider the following 218-residue polypeptide: Probable chemoreceptor glutamine deamidase CheD (218 aa).

Belongs to the CheD family.

The enzyme catalyses L-glutaminyl-[protein] + H2O = L-glutamyl-[protein] + NH4(+). Probably deamidates glutamine residues to glutamate on methyl-accepting chemotaxis receptors (MCPs), playing an important role in chemotaxis. This is Probable chemoreceptor glutamine deamidase CheD from Saccharophagus degradans (strain 2-40 / ATCC 43961 / DSM 17024).